The primary structure comprises 405 residues: S-adenosylmethionine synthase (405 aa).

Glycine 139–aspartate 144 is an ATP binding site.

It belongs to the AdoMet synthase 2 family. Requires Mg(2+) as cofactor.

It catalyses the reaction L-methionine + ATP + H2O = S-adenosyl-L-methionine + phosphate + diphosphate. It functions in the pathway amino-acid biosynthesis; S-adenosyl-L-methionine biosynthesis; S-adenosyl-L-methionine from L-methionine: step 1/1. Functionally, catalyzes the formation of S-adenosylmethionine from methionine and ATP. In Thermococcus onnurineus (strain NA1), this protein is S-adenosylmethionine synthase.